The sequence spans 874 residues: Alanine--tRNA ligase (874 aa).

Zn(2+) is bound by residues His563, His567, Cys665, and His669.

The protein belongs to the class-II aminoacyl-tRNA synthetase family. Zn(2+) serves as cofactor.

The protein localises to the cytoplasm. It carries out the reaction tRNA(Ala) + L-alanine + ATP = L-alanyl-tRNA(Ala) + AMP + diphosphate. Its function is as follows. Catalyzes the attachment of alanine to tRNA(Ala) in a two-step reaction: alanine is first activated by ATP to form Ala-AMP and then transferred to the acceptor end of tRNA(Ala). Also edits incorrectly charged Ser-tRNA(Ala) and Gly-tRNA(Ala) via its editing domain. This chain is Alanine--tRNA ligase, found in Haemophilus influenzae (strain 86-028NP).